A 530-amino-acid chain; its full sequence is Glucose-6-phosphate isomerase (530 aa).

The Proton donor role is filled by E322. Active-site residues include H351 and K455.

The protein belongs to the GPI family.

The protein localises to the cytoplasm. It catalyses the reaction alpha-D-glucose 6-phosphate = beta-D-fructose 6-phosphate. The protein operates within carbohydrate biosynthesis; gluconeogenesis. It functions in the pathway carbohydrate degradation; glycolysis; D-glyceraldehyde 3-phosphate and glycerone phosphate from D-glucose: step 2/4. Its function is as follows. Catalyzes the reversible isomerization of glucose-6-phosphate to fructose-6-phosphate. In Geotalea daltonii (strain DSM 22248 / JCM 15807 / FRC-32) (Geobacter daltonii), this protein is Glucose-6-phosphate isomerase.